Here is a 128-residue protein sequence, read N- to C-terminus: MYDNLKSLGITNPEEIDRYSLRQEANNDILKIYFQKDKGEFFAKSVKFKYPRQRKTVVADGVGQGYKEVQEISPNLRYIIDELDQICQRDRSEVDLKRKILDDLRHLESVVTNKISEIEADLEKLTRK.

The protein belongs to the UPF0325 family.

The sequence is that of UPF0325 protein YaeH from Shigella boydii serotype 18 (strain CDC 3083-94 / BS512).